Consider the following 132-residue polypeptide: Fatty acid-binding protein, adipocyte (132 aa).

N-acetylcysteine is present on cysteine 2. A Phosphoserine modification is found at serine 13. Residue tyrosine 20 is modified to Phosphotyrosine; by Tyr-kinases. Residues 22–32 (KEVGVGFATRK) carry the Nuclear localization signal motif. A fatty acid is bound at residue 127-129 (RVY).

Belongs to the calycin superfamily. Fatty-acid binding protein (FABP) family. In terms of assembly, monomer. Homodimer. Interacts with PPARG.

It localises to the cytoplasm. Its subcellular location is the nucleus. In terms of biological role, lipid transport protein in adipocytes. Binds both long chain fatty acids and retinoic acid. Delivers long-chain fatty acids and retinoic acid to their cognate receptors in the nucleus. The sequence is that of Fatty acid-binding protein, adipocyte (FABP4) from Cervus elaphus (Red deer).